The sequence spans 91 residues: Small ribosomal subunit protein uS19 (91 aa).

It belongs to the universal ribosomal protein uS19 family.

Functionally, protein S19 forms a complex with S13 that binds strongly to the 16S ribosomal RNA. This is Small ribosomal subunit protein uS19 from Methylibium petroleiphilum (strain ATCC BAA-1232 / LMG 22953 / PM1).